The sequence spans 193 residues: Partner of Y14 and mago (193 aa).

Disordered stretches follow at residues Met-1–Trp-27 and Ile-118–Leu-142. Positions Thr-122–Asp-137 are enriched in polar residues. Residues Thr-139–Ile-192 adopt a coiled-coil conformation.

This sequence belongs to the pym family. In terms of assembly, interacts (via N-terminus) with mago and tsu/Y14; the interaction is direct.

It is found in the cytoplasm. The protein resides in the nucleus. Functionally, regulator of the exon junction complex (EJC), a multiprotein complex that associates immediately upstream of the exon-exon junction on mRNAs and serves as a positional landmarks for the intron exon structure of genes and directs post-transcriptional processes in the cytoplasm such as mRNA export, nonsense-mediated mRNA decay (NMD) or translation. The chain is Partner of Y14 and mago from Bombyx mori (Silk moth).